Consider the following 57-residue polypeptide: Probable mRNA interferase HicA 1 (57 aa).

The protein belongs to the HicA mRNA interferase family. In terms of assembly, probably forms a complex with the cognate antitoxin HicB 1 which inhibits the mRNA interferase activity.

Functionally, toxic component of a type II toxin-antitoxin (TA) system. A probable translation-independent mRNA interferase. The chain is Probable mRNA interferase HicA 1 (hicA1) from Photorhabdus laumondii subsp. laumondii (strain DSM 15139 / CIP 105565 / TT01) (Photorhabdus luminescens subsp. laumondii).